The chain runs to 346 residues: Holliday junction branch migration complex subunit RuvB (346 aa).

The interval M1–Y182 is large ATPase domain (RuvB-L). ATP contacts are provided by residues L21, R22, G63, K66, T67, T68, E129–F131, R172, Y182, and R219. A Mg(2+)-binding site is contributed by T67. The small ATPAse domain (RuvB-S) stretch occupies residues T183–L253. The head domain (RuvB-H) stretch occupies residues N256–N346. The DNA site is built by R292, R311, and R316.

The protein belongs to the RuvB family. As to quaternary structure, homohexamer. Forms an RuvA(8)-RuvB(12)-Holliday junction (HJ) complex. HJ DNA is sandwiched between 2 RuvA tetramers; dsDNA enters through RuvA and exits via RuvB. An RuvB hexamer assembles on each DNA strand where it exits the tetramer. Each RuvB hexamer is contacted by two RuvA subunits (via domain III) on 2 adjacent RuvB subunits; this complex drives branch migration. In the full resolvosome a probable DNA-RuvA(4)-RuvB(12)-RuvC(2) complex forms which resolves the HJ.

Its subcellular location is the cytoplasm. It carries out the reaction ATP + H2O = ADP + phosphate + H(+). The RuvA-RuvB-RuvC complex processes Holliday junction (HJ) DNA during genetic recombination and DNA repair, while the RuvA-RuvB complex plays an important role in the rescue of blocked DNA replication forks via replication fork reversal (RFR). RuvA specifically binds to HJ cruciform DNA, conferring on it an open structure. The RuvB hexamer acts as an ATP-dependent pump, pulling dsDNA into and through the RuvAB complex. RuvB forms 2 homohexamers on either side of HJ DNA bound by 1 or 2 RuvA tetramers; 4 subunits per hexamer contact DNA at a time. Coordinated motions by a converter formed by DNA-disengaged RuvB subunits stimulates ATP hydrolysis and nucleotide exchange. Immobilization of the converter enables RuvB to convert the ATP-contained energy into a lever motion, pulling 2 nucleotides of DNA out of the RuvA tetramer per ATP hydrolyzed, thus driving DNA branch migration. The RuvB motors rotate together with the DNA substrate, which together with the progressing nucleotide cycle form the mechanistic basis for DNA recombination by continuous HJ branch migration. Branch migration allows RuvC to scan DNA until it finds its consensus sequence, where it cleaves and resolves cruciform DNA. The sequence is that of Holliday junction branch migration complex subunit RuvB from Rhizobium leguminosarum bv. trifolii (strain WSM2304).